A 384-amino-acid polypeptide reads, in one-letter code: S-adenosylmethionine synthase (384 aa).

Position 15 (histidine 15) interacts with ATP. Aspartate 17 contacts Mg(2+). Residue glutamate 43 participates in K(+) binding. Residues glutamate 56 and glutamine 99 each contribute to the L-methionine site. The interval 99 to 109 (QSPDINQGVDK) is flexible loop. ATP-binding positions include 164–166 (DAK), 230–231 (RF), aspartate 239, 245–246 (RK), alanine 262, and lysine 266. Aspartate 239 contacts L-methionine. Residue lysine 270 coordinates L-methionine.

Belongs to the AdoMet synthase family. In terms of assembly, homotetramer; dimer of dimers. Mg(2+) is required as a cofactor. Requires K(+) as cofactor.

It is found in the cytoplasm. It catalyses the reaction L-methionine + ATP + H2O = S-adenosyl-L-methionine + phosphate + diphosphate. It functions in the pathway amino-acid biosynthesis; S-adenosyl-L-methionine biosynthesis; S-adenosyl-L-methionine from L-methionine: step 1/1. In terms of biological role, catalyzes the formation of S-adenosylmethionine (AdoMet) from methionine and ATP. The overall synthetic reaction is composed of two sequential steps, AdoMet formation and the subsequent tripolyphosphate hydrolysis which occurs prior to release of AdoMet from the enzyme. In Vibrio parahaemolyticus serotype O3:K6 (strain RIMD 2210633), this protein is S-adenosylmethionine synthase.